Consider the following 105-residue polypeptide: Thioredoxin (105 aa).

The region spanning 2–105 (VKQIESKYAF…KLEATINELI (104 aa)) is the Thioredoxin domain. Lys-3 carries the post-translational modification N6-acetyllysine. Lys-8 carries the post-translational modification N6-succinyllysine. Residues Cys-32 and Cys-35 each act as nucleophile in the active site. Cys-32 and Cys-35 are disulfide-bonded. An N6-acetyllysine modification is found at Lys-39. S-nitrosocysteine is present on residues Cys-62 and Cys-69. Cys-73 carries the post-translational modification S-nitrosocysteine; alternate. Lys-94 is modified (N6-acetyllysine; alternate). Lys-94 is subject to N6-succinyllysine; alternate.

This sequence belongs to the thioredoxin family. As to quaternary structure, homodimer; disulfide-linked. Interacts with TXNIP through the redox-active site. Interacts with MAP3K5 and CASP3. Interacts with APEX1; the interaction stimulates the FOS/JUN AP-1 DNA-binding activity in a redox-dependent manner. In terms of processing, in the fully reduced protein, both Cys-69 and Cys-73 are nitrosylated in response to nitric oxide (NO). When two disulfide bonds are present in the protein, only Cys-73 is nitrosylated. Cys-73 can serve as donor for nitrosylation of target proteins.

The protein resides in the nucleus. The protein localises to the cytoplasm. Its subcellular location is the secreted. Its function is as follows. Participates in various redox reactions through the reversible oxidation of its active center dithiol to a disulfide and catalyzes dithiol-disulfide exchange reactions. Plays a role in the reversible S-nitrosylation of cysteine residues in target proteins, and thereby contributes to the response to intracellular nitric oxide. Nitrosylates the active site Cys of CASP3 in response to nitric oxide (NO), and thereby inhibits caspase-3 activity. Induces the FOS/JUN AP-1 DNA binding activity in ionizing radiation (IR) cells through its oxidation/reduction status and stimulates AP-1 transcriptional activity. This is Thioredoxin (TXN) from Ovis aries (Sheep).